A 164-amino-acid polypeptide reads, in one-letter code: Cyclic pyranopterin monophosphate synthase (164 aa).

Residues 77–79 (LCH) and 115–116 (ME) contribute to the substrate site. D130 is a catalytic residue.

It belongs to the MoaC family. As to quaternary structure, homohexamer; trimer of dimers.

The enzyme catalyses (8S)-3',8-cyclo-7,8-dihydroguanosine 5'-triphosphate = cyclic pyranopterin phosphate + diphosphate. Its pathway is cofactor biosynthesis; molybdopterin biosynthesis. Functionally, catalyzes the conversion of (8S)-3',8-cyclo-7,8-dihydroguanosine 5'-triphosphate to cyclic pyranopterin monophosphate (cPMP). This Sinorhizobium medicae (strain WSM419) (Ensifer medicae) protein is Cyclic pyranopterin monophosphate synthase.